Here is a 115-residue protein sequence, read N- to C-terminus: Na(+)/H(+) antiporter subunit C1 (115 aa).

The next 3 helical transmembrane spans lie at 1-21 (MEIL…YLIL), 28-48 (IIIG…TMGG), and 72-92 (LILT…VLAF).

Belongs to the CPA3 antiporters (TC 2.A.63) subunit C family. May form a heterooligomeric complex that consists of seven subunits: mnhA1, mnhB1, mnhC1, mnhD1, mnhE1, mnhF1 and mnhG1.

It is found in the cell membrane. Functionally, mnh complex is a Na(+)/H(+) antiporter involved in Na(+) excretion. This Staphylococcus saprophyticus subsp. saprophyticus (strain ATCC 15305 / DSM 20229 / NCIMB 8711 / NCTC 7292 / S-41) protein is Na(+)/H(+) antiporter subunit C1 (mnhC1).